A 152-amino-acid chain; its full sequence is Aspartate-rich protein (152 aa).

The signal sequence occupies residues 1 to 19; that stretch reads MQKLLLAVLFFSLLAVATA. Residues 82 to 113 are compositionally biased toward basic and acidic residues; it reads ATPKTEAEPGSLDKGEGTKGEKGKEGKKEKGE. The tract at residues 82 to 152 is disordered; the sequence is ATPKTEAEPG…VHENDDENED (71 aa). Residues 135–152 are compositionally biased toward acidic residues; the sequence is DDDDDRDDVHENDDENED.

In terms of tissue distribution, prismatic layer of shell (at protein level). Expressed primarily in the mantle with highest level in the mantle edge and lower level in the mantle pallium.

It localises to the secreted. This is Aspartate-rich protein from Margaritifera margaritifera (Freshwater pearl mussel).